We begin with the raw amino-acid sequence, 428 residues long: 3-phosphoshikimate 1-carboxyvinyltransferase (428 aa).

Positions 23, 24, and 28 each coordinate 3-phosphoshikimate. Residue Lys23 participates in phosphoenolpyruvate binding. Gly97 and Arg125 together coordinate phosphoenolpyruvate. 3-phosphoshikimate is bound by residues Ser170, Ser171, Gln172, Ser198, Asp314, Asn337, and Lys341. Residue Gln172 coordinates phosphoenolpyruvate. The active-site Proton acceptor is the Asp314. Phosphoenolpyruvate is bound by residues Arg345, Arg387, and Lys412.

It belongs to the EPSP synthase family. In terms of assembly, monomer.

The protein resides in the cytoplasm. It carries out the reaction 3-phosphoshikimate + phosphoenolpyruvate = 5-O-(1-carboxyvinyl)-3-phosphoshikimate + phosphate. The protein operates within metabolic intermediate biosynthesis; chorismate biosynthesis; chorismate from D-erythrose 4-phosphate and phosphoenolpyruvate: step 6/7. Its function is as follows. Catalyzes the transfer of the enolpyruvyl moiety of phosphoenolpyruvate (PEP) to the 5-hydroxyl of shikimate-3-phosphate (S3P) to produce enolpyruvyl shikimate-3-phosphate and inorganic phosphate. This Serratia proteamaculans (strain 568) protein is 3-phosphoshikimate 1-carboxyvinyltransferase.